The sequence spans 51 residues: Bacteriocin aureocin A53 (51 aa).

Residue M1 is modified to N-formylmethionine.

The protein localises to the secreted. Functionally, antibacterial peptide active against a broad range of lactic acid bacteria, L.monocytogenes and many epidemiologically unrelated strains of S.aureus involved in bovine mastitis. This chain is Bacteriocin aureocin A53 (aucA), found in Staphylococcus aureus.